Consider the following 967-residue polypeptide: Transmembrane channel-like protein 5 (967 aa).

Composition is skewed to polar residues over residues 1-10 (MSSFHQNSSY), 21-31 (GSRNHTHNYLE), 53-62 (NPHSSGSRTN), and 168-184 (QDNS…SNLP). The interval 1 to 240 (MSSFHQNSSY…EEGDGYSSSK (240 aa)) is disordered. The Extracellular segment spans residues 1-420 (MSSFHQNSSY…YFSFLRWLLK (420 aa)). Residues 421-441 (FNIFSFVMNFSFIIIPQFTVG) form a helical membrane-spanning segment. The Cytoplasmic segment spans residues 442–449 (AKNTLQFT). A helical membrane pass occupies residues 450 to 470 (GLEFFTGAGYFGDTVMYYGFY). Residues 471–487 (TNSTIRHRMGGASYNMQ) are Extracellular-facing. The chain crosses the membrane as a helical span at residues 488–508 (LAYIFTIGACLVVCFFSLLFS). Over 509-581 (MAKYFRNNFI…NQQLTRFSAH (73 aa)) the chain is Cytoplasmic. A helical transmembrane segment spans residues 582-602 (VAAWLVSTGVTAACCVAVYYL). Over 603–616 (AEYNSEFLKTHRNP) the chain is Extracellular. A helical transmembrane segment spans residues 617–637 (GAVLLLPFVVSCINLAVPRFY). Over 638-660 (SMFRLVERYEIPRQEVYVLLVRN) the chain is Cytoplasmic. A helical transmembrane segment spans residues 661-681 (IFLKISIVGILCYYWLNIVAL). The Extracellular portion of the chain corresponds to 682-694 (SGEECWETLIGQD). Residues 695 to 715 (IYRLLLMDFVFSLADSLLGEF) form a helical membrane-spanning segment. Residues 716-749 (LRRLIGMKFTSLSLQEFDIARNVLELIYAQTLTW) lie on the Cytoplasmic side of the membrane. The helical transmembrane segment at 750 to 770 (LGIFFCPLLPFIQMITLFIMF) threads the bilayer. The Extracellular portion of the chain corresponds to 771-796 (YVKNVSLMMNFQPPSKAWRASQMITF). A helical membrane pass occupies residues 797 to 817 (FIFLLFFPSFTGVLCTLAITI). At 818-861 (WRLKPSADCGPFRGLPSFIQSIYSWIDTLSRRPGYLWVVWIYQN) the chain is on the cytoplasmic side. A helical transmembrane segment spans residues 862–882 (LIGSVHFFFILTLIVLIITYL). The Extracellular portion of the chain corresponds to 883-967 (YWQITEGRKV…RSAQEENPIA (85 aa)).

The protein belongs to the TMC family. As to expression, ubiquitously expressed.

The protein resides in the membrane. Probable component of an ion channel. Molecular function hasn't been characterized yet. This Mus musculus (Mouse) protein is Transmembrane channel-like protein 5.